The chain runs to 307 residues: Myeloid-associated differentiation marker homolog (307 aa).

2 consecutive MARVEL domains span residues 15–148 and 153–304; these read TLKS…AKPG and YMAT…RLIF. 8 helical membrane passes run 19–39, 51–71, 85–105, 123–143, 156–176, 190–210, 228–248, and 278–298; these read PVGI…SLVV, LCMF…IVEF, FPIT…VIYP, IVAI…VSLT, TTPG…FVFI, WCLA…ILCV, YALL…IFSF, and MVAV…DLVY.

This sequence belongs to the MAL family.

The protein localises to the membrane. This chain is Myeloid-associated differentiation marker homolog (myadm), found in Xenopus laevis (African clawed frog).